A 266-amino-acid chain; its full sequence is Energy-coupling factor transporter transmembrane protein EcfT (266 aa).

A run of 5 helical transmembrane segments spans residues 32-52 (IIVVFLANNIWSYAILIAFTV), 71-91 (PLLWLIVFTVVLQLLFSPAGG), 107-127 (LINAGYIFVRFLLIIMMSTLL), 152-172 (VPVDTLAMMLSIALRFVPTLM), and 246-266 (DTVTWLLFLLGFVAILIFRHW).

Belongs to the energy-coupling factor EcfT family. In terms of assembly, forms a stable energy-coupling factor (ECF) transporter complex composed of 2 membrane-embedded substrate-binding proteins (S component), 2 ATP-binding proteins (A component) and 2 transmembrane proteins (T component). May be able to interact with more than 1 S component at a time.

The protein localises to the cell membrane. In terms of biological role, transmembrane (T) component of an energy-coupling factor (ECF) ABC-transporter complex. Unlike classic ABC transporters this ECF transporter provides the energy necessary to transport a number of different substrates. This is Energy-coupling factor transporter transmembrane protein EcfT from Levilactobacillus brevis (strain ATCC 367 / BCRC 12310 / CIP 105137 / JCM 1170 / LMG 11437 / NCIMB 947 / NCTC 947) (Lactobacillus brevis).